We begin with the raw amino-acid sequence, 267 residues long: Tryptophan synthase alpha chain (267 aa).

Active-site proton acceptor residues include E43 and D54.

The protein belongs to the TrpA family. In terms of assembly, tetramer of two alpha and two beta chains.

The catalysed reaction is (1S,2R)-1-C-(indol-3-yl)glycerol 3-phosphate + L-serine = D-glyceraldehyde 3-phosphate + L-tryptophan + H2O. The protein operates within amino-acid biosynthesis; L-tryptophan biosynthesis; L-tryptophan from chorismate: step 5/5. The alpha subunit is responsible for the aldol cleavage of indoleglycerol phosphate to indole and glyceraldehyde 3-phosphate. In Bacillus subtilis (strain 168), this protein is Tryptophan synthase alpha chain.